The following is a 145-amino-acid chain: MKLNDLSPAPGSRREKHRPGRGIGSGLGKTGGRGHKGQTSRSGGTIAPGFEGGQQPLHRRLPKFGFVSLKAMDRAEVRLSELAKVEGDIVTVQTLKDANVINVNVQRVKIMLSGEVTRAVTIGKGIGATKGARSAIEAAGGKFEE.

Residues 1-57 (MKLNDLSPAPGSRREKHRPGRGIGSGLGKTGGRGHKGQTSRSGGTIAPGFEGGQQPL) are disordered. Gly residues predominate over residues 21–31 (RGIGSGLGKTG).

It belongs to the universal ribosomal protein uL15 family. As to quaternary structure, part of the 50S ribosomal subunit.

In terms of biological role, binds to the 23S rRNA. This chain is Large ribosomal subunit protein uL15, found in Pseudomonas fluorescens (strain SBW25).